A 208-amino-acid chain; its full sequence is 3-demethoxyubiquinol 3-hydroxylase (208 aa).

Residues glutamate 57, glutamate 87, histidine 90, glutamate 139, glutamate 171, and histidine 174 each coordinate Fe cation.

Belongs to the COQ7 family. The cofactor is Fe cation.

Its subcellular location is the cell membrane. The catalysed reaction is a 5-methoxy-2-methyl-3-(all-trans-polyprenyl)benzene-1,4-diol + AH2 + O2 = a 3-demethylubiquinol + A + H2O. It participates in cofactor biosynthesis; ubiquinone biosynthesis. In terms of biological role, catalyzes the hydroxylation of 2-nonaprenyl-3-methyl-6-methoxy-1,4-benzoquinol during ubiquinone biosynthesis. The polypeptide is 3-demethoxyubiquinol 3-hydroxylase (Nitrosospira multiformis (strain ATCC 25196 / NCIMB 11849 / C 71)).